The primary structure comprises 1462 residues: Tyrosine-protein phosphatase 69D (1462 aa).

Residues 1-28 form the signal peptide; that stretch reads MALLYRRMSMLLNIILAYIFLCAICVQG. 2 Ig-like C2-type domains span residues 29–125 and 131–230; these read SVKQ…TEFQ and PSKV…KEIT. The Extracellular portion of the chain corresponds to 29-805; sequence SVKQEWAEIG…MDYYLSIGVK (777 aa). N-linked (GlcNAc...) asparagine glycans are attached at residues Asn-40, Asn-58, Asn-64, Asn-85, Asn-109, Asn-119, Asn-162, Asn-191, Asn-196, Asn-209, Asn-255, Asn-288, Asn-302, Asn-429, Asn-442, Asn-451, Asn-516, Asn-613, Asn-701, and Asn-755. Cys-45 and Cys-112 form a disulfide bridge. Cys-154 and Cys-214 are joined by a disulfide. Fibronectin type-III domains follow at residues 237-332, 334-435, and 439-547; these read PQVS…TLSY, PIFI…TMDG, and KPTN…TPDA. A helical transmembrane segment spans residues 806–823; that stretch reads AGAVLLGVILVFIVLWVF. Topologically, residues 824–1462 are cytoplasmic; the sequence is HHKKTKNELQ…LHHIAESTLD (639 aa). 2 Tyrosine-protein phosphatase domains span residues 893-1156 and 1187-1450; these read FLRE…LLDT and LEVE…IINY. Catalysis depends on phosphocysteine intermediate residues Cys-1097 and Cys-1391.

The protein belongs to the protein-tyrosine phosphatase family. Receptor class subfamily.

The protein localises to the membrane. It catalyses the reaction O-phospho-L-tyrosyl-[protein] + H2O = L-tyrosyl-[protein] + phosphate. Possible cell adhesion receptor. This Drosophila melanogaster (Fruit fly) protein is Tyrosine-protein phosphatase 69D (Ptp69D).